The chain runs to 208 residues: MKKFIFCFLYLYTLNIFAVSKIAHNKLNSCSITRNIFNNYEPKVFETTNNLLRKTGRLSKFYGEMILIRGKILDQNCVPVTDAKVYLWQAGSGGKYPYEPLKTRVDKRRFTNKSDSSFTGSGIVTTNNKGEYYFISMLPYKSSHYLRTANIRIEHPNLTTLETRLELSDQNMCDNDCGEISPILTETKKNIQSYCFDLVLQGTTLKRY.

Belongs to the intradiol ring-cleavage dioxygenase family.

In Rickettsia typhi (strain ATCC VR-144 / Wilmington), this protein is Putative dioxygenase RT0384.